The following is a 147-amino-acid chain: Hemoglobin subunit beta (147 aa).

Positions 3–147 (HWTAEEKQLI…VAHALARKYH (145 aa)) constitute a Globin domain. 2 residues coordinate heme b: H64 and H93.

This sequence belongs to the globin family. As to quaternary structure, heterotetramer of two alpha chains and two beta chains. In terms of tissue distribution, red blood cells.

Its function is as follows. Involved in oxygen transport from the lung to the various peripheral tissues. The chain is Hemoglobin subunit beta (HBB) from Cairina moschata (Muscovy duck).